The sequence spans 194 residues: dTTP/UTP pyrophosphatase (194 aa).

Catalysis depends on Asp-66, which acts as the Proton acceptor.

The protein belongs to the Maf family. YhdE subfamily. The cofactor is a divalent metal cation.

It localises to the cytoplasm. It catalyses the reaction dTTP + H2O = dTMP + diphosphate + H(+). The enzyme catalyses UTP + H2O = UMP + diphosphate + H(+). Nucleoside triphosphate pyrophosphatase that hydrolyzes dTTP and UTP. May have a dual role in cell division arrest and in preventing the incorporation of modified nucleotides into cellular nucleic acids. This is dTTP/UTP pyrophosphatase from Anaeromyxobacter dehalogenans (strain 2CP-1 / ATCC BAA-258).